The primary structure comprises 366 residues: Adenine DNA glycosylase (366 aa).

Residue Trp30–Arg31 participates in DNA binding. Catalysis depends on Glu43, which acts as the Proton donor/acceptor. DNA is bound by residues Gln48–Thr49, Leu86–Tyr88, Tyr126, and Glu188. The HhH domain occupies Arg105 to Ser133. Cys198, Cys205, Cys208, and Cys214 together coordinate [4Fe-4S] cluster. Ser308 is a DNA binding site.

Belongs to the Nth/MutY family. It depends on [4Fe-4S] cluster as a cofactor.

It carries out the reaction Hydrolyzes free adenine bases from 7,8-dihydro-8-oxoguanine:adenine mismatched double-stranded DNA, leaving an apurinic site.. In terms of biological role, base excision repair (BER) glycosylase that initiates repair of A:oxoG to C:G by removing the inappropriately paired adenine base from the DNA backbone, generating an abasic site product. 8-oxoguanine (oxoG) is a genotoxic DNA lesion resulting from oxidation of guanine; this residue is misread by replicative DNA polymerases, that insert adenine instead of cytosine opposite the oxidized damaged base. Shows a powerful dicrimination of A versus C, since it does not cleave cytosine in oxoG:C pairs. May also be able to remove adenine from A:G mispairs, although this activity may not be physiologically relevant. The chain is Adenine DNA glycosylase from Geobacillus stearothermophilus (Bacillus stearothermophilus).